Here is a 794-residue protein sequence, read N- to C-terminus: Signal transducer and activator of transcription 5A (794 aa).

A Phosphotyrosine modification is found at tyrosine 90. Residues serine 128 and serine 193 each carry the phosphoserine modification. One can recognise an SH2 domain in the interval 589 to 686 (WNDGAILGFV…EVFSKYYTPV (98 aa)). At tyrosine 682 the chain carries Phosphotyrosine. The residue at position 694 (tyrosine 694) is a Phosphotyrosine; by JAK2. Positions 773–794 (DSLDSRLSPPAGLFTSARGSLS) are disordered. Serine 780 is modified (phosphoserine).

This sequence belongs to the transcription factor STAT family. In terms of assembly, forms a homodimer or a heterodimer with a related family member. Binds NR3C1. Interacts with NCOA1 and SOCS7. Interacts with ERBB4. Interacts with EBF4. Interacts with CD69. Tyrosine phosphorylated in response to KITLG/SCF, IL2, IL3, IL7, IL15, CSF2/GMCSF, GH1, PRL, EPO and THPO. Activated KIT promotes phosphorylation on tyrosine residues and subsequent translocation to the nucleus. Tyrosine phosphorylated in response to constitutively activated FGFR1, FGFR2, FGFR3 and FGFR4. Tyrosine phosphorylation is required for DNA-binding activity and dimerization. Serine phosphorylation is also required for maximal transcriptional activity. Tyrosine phosphorylated in response to signaling via activated FLT3; wild-type FLT3 results in much weaker phosphorylation than constitutively activated mutant FLT3. Alternatively, can be phosphorylated by JAK2 at Tyr-694. In terms of processing, ISGylated.

The protein localises to the cytoplasm. It localises to the nucleus. Carries out a dual function: signal transduction and activation of transcription. Mediates cellular responses to the cytokine KITLG/SCF and other growth factors. Mediates cellular responses to ERBB4. May mediate cellular responses to activated FGFR1, FGFR2, FGFR3 and FGFR4. Binds to the GAS element and activates PRL-induced transcription. Regulates the expression of milk proteins during lactation. The sequence is that of Signal transducer and activator of transcription 5A (STAT5A) from Homo sapiens (Human).